The chain runs to 203 residues: Glycerol-3-phosphate acyltransferase (203 aa).

Helical transmembrane passes span 10–30 (LLLGLTALLAYLLGSVPFGIM), 60–80 (LAAFLTLVLDAGKGAIAVFLA), 88–108 (AAQLAGFAAFLGHCFPVFLGF), 118–138 (LGTLLALAWPIGLAACAIWAI), and 162–182 (FTLGLPSAVVFCAALATLIFL).

It belongs to the PlsY family. Probably interacts with PlsX.

Its subcellular location is the cell inner membrane. It carries out the reaction an acyl phosphate + sn-glycerol 3-phosphate = a 1-acyl-sn-glycero-3-phosphate + phosphate. It participates in lipid metabolism; phospholipid metabolism. Catalyzes the transfer of an acyl group from acyl-phosphate (acyl-PO(4)) to glycerol-3-phosphate (G3P) to form lysophosphatidic acid (LPA). This enzyme utilizes acyl-phosphate as fatty acyl donor, but not acyl-CoA or acyl-ACP. This is Glycerol-3-phosphate acyltransferase from Jannaschia sp. (strain CCS1).